A 464-amino-acid chain; its full sequence is Arginine biosynthesis bifunctional protein ArgJ, mitochondrial (464 aa).

Substrate contacts are provided by threonine 191, lysine 220, threonine 231, glutamate 318, asparagine 459, and threonine 464. Threonine 231 (nucleophile) is an active-site residue.

Belongs to the ArgJ family. In terms of assembly, heterodimer of an alpha and a beta chain. The alpha and beta chains are autoproteolytically processed from a single precursor protein within the mitochondrion.

It is found in the mitochondrion matrix. It carries out the reaction N(2)-acetyl-L-ornithine + L-glutamate = N-acetyl-L-glutamate + L-ornithine. The catalysed reaction is L-glutamate + acetyl-CoA = N-acetyl-L-glutamate + CoA + H(+). The protein operates within amino-acid biosynthesis; L-arginine biosynthesis; L-ornithine and N-acetyl-L-glutamate from L-glutamate and N(2)-acetyl-L-ornithine (cyclic): step 1/1. Its pathway is amino-acid biosynthesis; L-arginine biosynthesis; N(2)-acetyl-L-ornithine from L-glutamate: step 1/4. Its function is as follows. Catalyzes two activities which are involved in the cyclic version of arginine biosynthesis: the synthesis of acetylglutamate from glutamate and acetyl-CoA, and of ornithine by transacetylation between acetylornithine and glutamate. The sequence is that of Arginine biosynthesis bifunctional protein ArgJ, mitochondrial from Pyricularia oryzae (strain 70-15 / ATCC MYA-4617 / FGSC 8958) (Rice blast fungus).